A 114-amino-acid polypeptide reads, in one-letter code: RNA polymerase-binding protein RbpA (114 aa).

The protein belongs to the RNA polymerase-binding protein RbpA family. As to quaternary structure, monomer. Forms a complex with the RNAP catalytic core, specifically with the beta subunit (RpoB); its binding site may overlap with that of Rif. May bind free principal sigma factors.

Functionally, binds to RNA polymerase (RNAP), probably stimulating transcriptions from principal, but not alternative sigma factor promoters. Partially restores transcription in the presence of rifampicin (Rif) in vitro; overexpression leads to an increase in the Rif tolerance in vivo, with smaller colonies. Seems to act by removing Rif from its binding site and preventing its further binding. No longer stimulates transcription in Rif-resistant RNA polymerase (with mutations in rpoB). In Mycolicibacterium smegmatis (strain ATCC 700084 / mc(2)155) (Mycobacterium smegmatis), this protein is RNA polymerase-binding protein RbpA.